The primary structure comprises 329 residues: MSFFKKLKEKITKQTDSVSEKFKDGLEKTRNSFQNKVNDLVSRYRKVDEDFFEELEEVLISADVGFTTVMELIDELKKEVKRRNIQDPKEVQSVISEKLVEIYNSGDEQISELNIQDGRLNVILLVGVNGVGKTTTIGKLAHKMKQEGKSVVLAAGDTFRAGAIEQLEVWGERTGVPVIKQTAGSDPAAVIYDAVHAAKARNADVLICDTAGRLQNKVNLMKELEKVKRVIEREVPEAPHEVLLALDATTGQNAMAQAKEFSKATNVTGIALTKLDGTAKGGIVLAIRNELHIPVKLVGLGEKVDDLQEFDPESYVYGLFSDLVEKADD.

Residues glycine 127–threonine 134, aspartate 209–arginine 213, and threonine 273–aspartate 276 contribute to the GTP site.

It belongs to the GTP-binding SRP family. FtsY subfamily. In terms of assembly, part of the signal recognition particle protein translocation system, which is composed of SRP and FtsY.

It localises to the cell membrane. The protein localises to the cytoplasm. The enzyme catalyses GTP + H2O = GDP + phosphate + H(+). Its function is as follows. Involved in targeting and insertion of nascent membrane proteins into the cytoplasmic membrane. Acts as a receptor for the complex formed by the signal recognition particle (SRP) and the ribosome-nascent chain (RNC). The polypeptide is Signal recognition particle receptor FtsY (Bacillus subtilis (strain 168)).